A 293-amino-acid chain; its full sequence is Movement protein BC1 (293 aa).

Belongs to the begomovirus movement protein BC1 family. As to quaternary structure, binds to dimeric supercoiled plasmid DNA. In terms of processing, phosphorylated.

Its subcellular location is the host cell membrane. The protein resides in the host microsome membrane. It is found in the host endoplasmic reticulum membrane. In terms of biological role, transports viral genome to neighboring plant cells directly through plasmosdesmata, without any budding. The movement protein allows efficient cell to cell propagation, by bypassing the host cell wall barrier. Begomovirus genome is shuttled out of nucleus by Nuclear shuttle protein (NSP) and the movement protein transports the DNA-NSP complex to cell plasmodesmata and facilitates further movement across the cell wall. The chain is Movement protein BC1 from Potato yellow mosaic virus (isolate Venezuela) (PYMV).